A 478-amino-acid polypeptide reads, in one-letter code: Protein trichome birefringence-like 20 (478 aa).

The helical; Signal-anchor for type II membrane protein transmembrane segment at 10-30 (IGLVIFPLILLTIAPILYLFF) threads the bilayer. Over residues 50–68 (SSAISSPSRYNHSSSSSDS) the composition is skewed to low complexity. The tract at residues 50 to 125 (SSAISSPSRY…KEHRRKKRKR (76 aa)) is disordered. Residues 92–110 (SSSLHNNDRLSISSSNGHH) are compositionally biased toward polar residues. The segment covering 112 to 125 (VTPKKEHRRKKRKR) has biased composition (basic residues). Positions 200-202 (GDS) match the GDS motif motif. Positions 447–461 (DCVHWCLPGPIDSWN) match the DCXHWCLPGXXDXWN motif motif.

It belongs to the PC-esterase family. TBL subfamily.

It is found in the membrane. May act as a bridging protein that binds pectin and other cell wall polysaccharides. Probably involved in maintaining esterification of pectins. May be involved in the specific O-acetylation of cell wall polymers. This Arabidopsis thaliana (Mouse-ear cress) protein is Protein trichome birefringence-like 20 (TBL20).